A 277-amino-acid polypeptide reads, in one-letter code: Undecaprenyl-diphosphatase (277 aa).

Transmembrane regions (helical) follow at residues 5–25, 44–64, 86–106, 110–130, 184–204, 219–239, and 255–275; these read WTAA…FLPI, RAMA…VWEF, LNLL…ADTI, LFNA…MLWA, AATE…AVYS, VFAI…RALL, and IAFG…WASA.

The protein belongs to the UppP family.

Its subcellular location is the cell inner membrane. It catalyses the reaction di-trans,octa-cis-undecaprenyl diphosphate + H2O = di-trans,octa-cis-undecaprenyl phosphate + phosphate + H(+). Its function is as follows. Catalyzes the dephosphorylation of undecaprenyl diphosphate (UPP). Confers resistance to bacitracin. This chain is Undecaprenyl-diphosphatase, found in Pseudomonas savastanoi pv. phaseolicola (strain 1448A / Race 6) (Pseudomonas syringae pv. phaseolicola (strain 1448A / Race 6)).